Reading from the N-terminus, the 413-residue chain is Probable short/branched chain specific acyl-CoA dehydrogenase (413 aa).

Residues 152-161 and 186-188 contribute to the FAD site; these read FCLSESGSGS and WIT. Ser161 contributes to the substrate binding site. Residues Tyr208, Tyr262, and 270–273 contribute to the substrate site; that span reads NEGR. FAD is bound by residues Arg298, Gln309, and 366-370; that span reads SMLGG. Glu393 (proton acceptor) is an active-site residue. 395-397 is an FAD binding site; that stretch reads TSN.

This sequence belongs to the acyl-CoA dehydrogenase family. As to quaternary structure, homotetramer. The cofactor is FAD.

The catalysed reaction is 2-methylbutanoyl-CoA + oxidized [electron-transfer flavoprotein] + H(+) = (2E)-2-methylbut-2-enoyl-CoA + reduced [electron-transfer flavoprotein]. It participates in lipid metabolism; mitochondrial fatty acid beta-oxidation. Its pathway is amino-acid degradation; L-isoleucine degradation. In terms of biological role, probable short and branched chain specific acyl-CoA dehydrogenase that catalyzes the removal of one hydrogen from C-2 and C-3 of the fatty acyl-CoA thioester, resulting in the formation of trans-2-enoyl-CoA. The chain is Probable short/branched chain specific acyl-CoA dehydrogenase (acadsb) from Dictyostelium discoideum (Social amoeba).